The sequence spans 166 residues: Lipoprotein signal peptidase (166 aa).

The next 3 membrane-spanning stretches (helical) occupy residues 12–32 (WLWL…LILQ), 70–90 (WFFA…MYRA), and 102–122 (ALII…GFVV). Residues D123 and D141 contribute to the active site. The chain crosses the membrane as a helical span at residues 142 to 162 (SAICFGAAMIVLEGFLPNAAA).

It belongs to the peptidase A8 family.

It is found in the cell inner membrane. The enzyme catalyses Release of signal peptides from bacterial membrane prolipoproteins. Hydrolyzes -Xaa-Yaa-Zaa-|-(S,diacylglyceryl)Cys-, in which Xaa is hydrophobic (preferably Leu), and Yaa (Ala or Ser) and Zaa (Gly or Ala) have small, neutral side chains.. Its pathway is protein modification; lipoprotein biosynthesis (signal peptide cleavage). Its function is as follows. This protein specifically catalyzes the removal of signal peptides from prolipoproteins. This is Lipoprotein signal peptidase from Enterobacter sp. (strain 638).